The sequence spans 3075 residues: Laminin subunit alpha-1 (3075 aa).

Residues 1–17 (MRGGVLLVLLLCVAAQC) form the signal peptide. One can recognise a Laminin N-terminal domain in the interval 18 to 269 (RQRGLFPAIL…SIKDISVGGM (252 aa)). 16 cysteine pairs are disulfide-bonded: Cys270-Cys279, Cys272-Cys290, Cys292-Cys301, Cys304-Cys324, Cys327-Cys336, Cys329-Cys361, Cys364-Cys373, Cys376-Cys394, Cys397-Cys409, Cys399-Cys427, Cys429-Cys438, Cys441-Cys451, Cys454-Cys467, Cys456-Cys471, Cys473-Cys482, and Cys485-Cys500. Laminin EGF-like domains are found at residues 270 to 326 (CICY…TCEA), 327 to 396 (CNCH…PCRP), 397 to 453 (CNCD…TCVS), and 454 to 502 (CGCN…GCSE). One can recognise a Laminin EGF-like 5; first part domain in the interval 503–512 (CFCFGVSDVC). Positions 516–708 (SWPVGQVNSM…DLVVAADVEH (193 aa)) constitute a Laminin IV type A 1 domain. Asn665 is a glycosylation site (N-linked (GlcNAc...) asparagine). The Laminin EGF-like 5; second part domain maps to 709–741 (CECPQGYTGTSCESCLSGYYRVDGILFGGICQP). 32 disulfides stabilise this stretch: Cys742–Cys751, Cys744–Cys757, Cys760–Cys769, Cys772–Cys788, Cys791–Cys806, Cys793–Cys816, Cys819–Cys828, Cys831–Cys846, Cys849–Cys863, Cys851–Cys870, Cys873–Cys882, Cys885–Cys899, Cys902–Cys914, Cys904–Cys921, Cys923–Cys932, Cys935–Cys948, Cys951–Cys963, Cys953–Cys969, Cys971–Cys980, Cys983–Cys995, Cys998–Cys1007, Cys1000–Cys1014, Cys1016–Cys1025, Cys1028–Cys1041, Cys1044–Cys1056, Cys1046–Cys1063, Cys1065–Cys1074, Cys1077–Cys1087, Cys1090–Cys1102, Cys1092–Cys1118, Cys1120–Cys1129, and Cys1132–Cys1147. Laminin EGF-like domains follow at residues 742–790 (CECH…DCQP), 791–848 (CACP…SCVP), 849–901 (CDCS…NCRA), 902–950 (CECH…GCRP), 951–997 (CNCS…SCTP), 998–1043 (CDCP…GCQA), 1044–1089 (CNCS…DCVP), and 1090–1149 (CDCD…GCSP). The region spanning 1150–1159 (CFCSGLSHLC) is the Laminin EGF-like 14; first part domain. Residues 1170 to 1361 (VTLGSDQPLL…EEEVASLLEN (192 aa)) form the Laminin IV type A 2 domain. The 41-residue stretch at 1362–1402 (CVCPPGTVGFSCQDCAPGYHRGKLPAGSDRGPRPLVAPCVP) folds into the Laminin EGF-like 14; second part domain. 12 disulfides stabilise this stretch: Cys1403–Cys1412, Cys1405–Cys1419, Cys1422–Cys1431, Cys1434–Cys1449, Cys1452–Cys1466, Cys1454–Cys1476, Cys1479–Cys1488, Cys1491–Cys1506, Cys1509–Cys1521, Cys1511–Cys1528, Cys1530–Cys1539, and Cys1542–Cys1553. Laminin EGF-like domains lie at 1403–1451 (CSCN…DCAL), 1452–1508 (CACP…SCQK), and 1509–1555 (CDCN…DCVS). Residues 1556-2116 (CDDECVGVLL…SQARKQAASI (561 aa)) form a domain II and I region. 5 N-linked (GlcNAc...) asparagine glycosylation sites follow: Asn1579, Asn1689, Asn1717, Asn2047, and Asn2243. Positions 1706-1783 (MQIRDFTQLH…KMQESNHLLL (78 aa)) form a coiled coil. Laminin G-like domains are found at residues 2117 to 2297 (KVAV…CRGC), 2305 to 2481 (DPSF…RKGC), 2486 to 2673 (IRSV…LDTC), 2713 to 2885 (AHQF…VNRC), and 2890 to 3070 (QEGT…LHSC). 2 disulfide bridges follow: Cys2271–Cys2297 and Cys2457–Cys2481. The Cell attachment site motif lies at 2534 to 2536 (RGD). 3 disulfides stabilise this stretch: Cys2646–Cys2673, Cys2860–Cys2885, and Cys3039–Cys3070.

In terms of assembly, laminin is a complex glycoprotein, consisting of three different polypeptide chains (alpha, beta, gamma), which are bound to each other by disulfide bonds into a cross-shaped molecule comprising one long and three short arms with globules at each end. Alpha-1 is a subunit of laminin-1 (laminin-111 or EHS laminin) and laminin-3 (laminin-121 or S-laminin). Post-translationally, tyrosine phosphorylated by PKDCC/VLK.

It localises to the secreted. It is found in the extracellular space. The protein localises to the extracellular matrix. Its subcellular location is the basement membrane. Binding to cells via a high affinity receptor, laminin is thought to mediate the attachment, migration and organization of cells into tissues during embryonic development by interacting with other extracellular matrix components. In Homo sapiens (Human), this protein is Laminin subunit alpha-1 (LAMA1).